The primary structure comprises 562 residues: Beta-hexosaminidase (562 aa).

The N-terminal stretch at 1–22 (MVLDKMIIFHLLLWLCNVVVHA) is a signal peptide. N-linked (GlcNAc...) asparagine glycans are attached at residues asparagine 38, asparagine 52, asparagine 111, asparagine 337, asparagine 382, asparagine 396, and asparagine 463.

Belongs to the glycosyl hydrolase 20 family.

It carries out the reaction Hydrolysis of terminal non-reducing N-acetyl-D-hexosamine residues in N-acetyl-beta-D-hexosaminides.. Its function is as follows. Has a broad substrate specificity. This chain is Beta-hexosaminidase (HEX1), found in Candida albicans (Yeast).